The sequence spans 305 residues: Glycine--tRNA ligase alpha subunit (305 aa).

The protein belongs to the class-II aminoacyl-tRNA synthetase family. Tetramer of two alpha and two beta subunits.

Its subcellular location is the cytoplasm. The catalysed reaction is tRNA(Gly) + glycine + ATP = glycyl-tRNA(Gly) + AMP + diphosphate. The protein is Glycine--tRNA ligase alpha subunit of Ligilactobacillus salivarius (strain UCC118) (Lactobacillus salivarius).